We begin with the raw amino-acid sequence, 253 residues long: Malonyl-[acyl-carrier protein] O-methyltransferase (253 aa).

Belongs to the methyltransferase superfamily.

The enzyme catalyses malonyl-[ACP] + S-adenosyl-L-methionine = malonyl-[ACP] methyl ester + S-adenosyl-L-homocysteine. It functions in the pathway cofactor biosynthesis; biotin biosynthesis. Functionally, converts the free carboxyl group of a malonyl-thioester to its methyl ester by transfer of a methyl group from S-adenosyl-L-methionine (SAM). It allows to synthesize pimeloyl-ACP via the fatty acid synthetic pathway. This Pectobacterium atrosepticum (strain SCRI 1043 / ATCC BAA-672) (Erwinia carotovora subsp. atroseptica) protein is Malonyl-[acyl-carrier protein] O-methyltransferase.